Here is a 66-residue protein sequence, read N- to C-terminus: COP-associated protein (66 aa).

The 66-residue stretch at 1–66 (MKVTFQVPSI…ALLDAGQEVV (66 aa)) folds into the HMA domain. The Cu cation site is built by Cys12 and Cys15.

Its function is as follows. Part of a cation-transporting system which is associated with copper export out of the H.pylori cells. The sequence is that of COP-associated protein (copP) from Helicobacter pylori (strain J99 / ATCC 700824) (Campylobacter pylori J99).